Reading from the N-terminus, the 232-residue chain is Protein INAPERTURATE POLLEN 1 homolog (232 aa).

As to quaternary structure, interacts with LECRKS7/DAF1.

Its subcellular location is the cytoplasm. Its function is as follows. Required for pollen aperture formation, male fertility and LECRKS7/DAF1 function. Seems to be involved in operculum protrusion. Participates in the modification of plasma membrane at future aperture sites, possibly by creating close contact between the plasma membrane and callose wall to prevent primexine formation and sporopollenin deposition. This chain is Protein INAPERTURATE POLLEN 1 homolog, found in Oryza sativa subsp. japonica (Rice).